We begin with the raw amino-acid sequence, 175 residues long: UPF0398 protein SPD_0338 (175 aa).

This sequence belongs to the UPF0398 family.

The sequence is that of UPF0398 protein SPD_0338 from Streptococcus pneumoniae serotype 2 (strain D39 / NCTC 7466).